Here is a 196-residue protein sequence, read N- to C-terminus: Ribonuclease HII (196 aa).

The RNase H type-2 domain maps to 1–196 (MVTIGVDEAG…FAPVAQLQLL (196 aa)). Asp-7, Glu-8, and Asp-103 together coordinate a divalent metal cation.

Belongs to the RNase HII family. Mn(2+) is required as a cofactor. The cofactor is Mg(2+).

Its subcellular location is the cytoplasm. The catalysed reaction is Endonucleolytic cleavage to 5'-phosphomonoester.. In terms of biological role, endonuclease that specifically degrades the RNA of RNA-DNA hybrids. This Novosphingobium aromaticivorans (strain ATCC 700278 / DSM 12444 / CCUG 56034 / CIP 105152 / NBRC 16084 / F199) protein is Ribonuclease HII.